A 723-amino-acid polypeptide reads, in one-letter code: Polyribonucleotide nucleotidyltransferase (723 aa).

Residues Asp-497 and Asp-503 each contribute to the Mg(2+) site. The KH domain maps to 564 to 623; sequence PRLLSFRIDPELIGTVIGPGGRTIKGITERTNTKIDIEDGGIVTIASHDGAAAEAAQRII. One can recognise an S1 motif domain in the interval 633–701; that stretch reads GEVFTGTITR…NRGRINLTLR (69 aa). A disordered region spans residues 701–723; the sequence is RGVPQNGEETQSEPAPTPVAPLN.

Belongs to the polyribonucleotide nucleotidyltransferase family. Requires Mg(2+) as cofactor.

Its subcellular location is the cytoplasm. The catalysed reaction is RNA(n+1) + phosphate = RNA(n) + a ribonucleoside 5'-diphosphate. Functionally, involved in mRNA degradation. Catalyzes the phosphorolysis of single-stranded polyribonucleotides processively in the 3'- to 5'-direction. The polypeptide is Polyribonucleotide nucleotidyltransferase (Prochlorococcus marinus (strain MIT 9313)).